The primary structure comprises 210 residues: Urease accessory protein UreG (210 aa).

14–21 (GPVGSGKT) is a binding site for GTP.

It belongs to the SIMIBI class G3E GTPase family. UreG subfamily. In terms of assembly, homodimer. UreD, UreF and UreG form a complex that acts as a GTP-hydrolysis-dependent molecular chaperone, activating the urease apoprotein by helping to assemble the nickel containing metallocenter of UreC. The UreE protein probably delivers the nickel.

Its subcellular location is the cytoplasm. Functionally, facilitates the functional incorporation of the urease nickel metallocenter. This process requires GTP hydrolysis, probably effectuated by UreG. The sequence is that of Urease accessory protein UreG from Rhodopseudomonas palustris (strain BisA53).